Here is a 161-residue protein sequence, read N- to C-terminus: Ribosomal RNA large subunit methyltransferase H (161 aa).

S-adenosyl-L-methionine is bound by residues L78, G110, and 129–134 (LSRLTF).

It belongs to the RNA methyltransferase RlmH family. Homodimer.

It is found in the cytoplasm. It catalyses the reaction pseudouridine(1915) in 23S rRNA + S-adenosyl-L-methionine = N(3)-methylpseudouridine(1915) in 23S rRNA + S-adenosyl-L-homocysteine + H(+). Functionally, specifically methylates the pseudouridine at position 1915 (m3Psi1915) in 23S rRNA. The chain is Ribosomal RNA large subunit methyltransferase H from Heliobacterium modesticaldum (strain ATCC 51547 / Ice1).